The sequence spans 452 residues: Netrin-5 (452 aa).

A signal peptide spans 1–34 (MTDYRTLFSSPGAGSTVTTPITLSLLLLLSQATS). 11 cysteine pairs are disulfide-bonded: C173–C182, C175–C191, C193–C202, C205–C225, C228–C240, C230–C247, C249–C258, C261–C275, C298–C376, C302–C378, and C317–C438. Laminin EGF-like domains are found at residues 173-227 (CQCH…PCLP) and 228-277 (CQCH…PCQR). In terms of domain architecture, NTR spans 298-438 (CQGYCNVSVS…LQQKERGGAC (141 aa)). A glycan (N-linked (GlcNAc...) asparagine) is linked at N303.

The protein localises to the secreted. Functionally, plays a role in neurogenesis. Prevents motor neuron cell body migration out of the neural tube. This Mus musculus (Mouse) protein is Netrin-5 (Ntn5).